The chain runs to 263 residues: N-acyl homoserine lactonase AttM (263 aa).

Zn(2+) is bound by residues His103, His105, Asp107, His108, His180, Asp202, and His247.

Belongs to the metallo-beta-lactamase superfamily. It depends on Zn(2+) as a cofactor.

The enzyme catalyses an N-acyl-L-homoserine lactone + H2O = an N-acyl-L-homoserine + H(+). The chain is N-acyl homoserine lactonase AttM from Rhizobium johnstonii (strain DSM 114642 / LMG 32736 / 3841) (Rhizobium leguminosarum bv. viciae).